Consider the following 80-residue polypeptide: Dolichol-phosphate mannose synthase subunit 2 (80 aa).

2 helical membrane-spanning segments follow: residues 10–30 and 50–70; these read LLLS…VIIL and ILVP…FIGM.

Belongs to the DPM2 family. In terms of assembly, component of the dolichol-phosphate mannose (DPM) synthase complex composed of DPMS1, DPMS2 and DPMS3; in the complex interacts directly with DPMS3. Associates with the GPI-GlcNAc transferase (GPI-GnT) complex.

The protein resides in the endoplasmic reticulum membrane. Its pathway is protein modification; protein glycosylation. In terms of biological role, regulates the biosynthesis of dolichol phosphate-mannose. Regulatory subunit of the dolichol-phosphate mannose (DPM) synthase complex; essential for the ER localization and stable expression of DPMS1. This is Dolichol-phosphate mannose synthase subunit 2 from Arabidopsis thaliana (Mouse-ear cress).